A 263-amino-acid polypeptide reads, in one-letter code: GTP cyclohydrolase FolE2 (263 aa).

This sequence belongs to the GTP cyclohydrolase IV family.

It carries out the reaction GTP + H2O = 7,8-dihydroneopterin 3'-triphosphate + formate + H(+). It participates in cofactor biosynthesis; 7,8-dihydroneopterin triphosphate biosynthesis; 7,8-dihydroneopterin triphosphate from GTP: step 1/1. In terms of biological role, converts GTP to 7,8-dihydroneopterin triphosphate. This is GTP cyclohydrolase FolE2 from Nitrosospira multiformis (strain ATCC 25196 / NCIMB 11849 / C 71).